A 235-amino-acid polypeptide reads, in one-letter code: Glucosamine-6-phosphate deaminase (235 aa).

Asp-62 (proton acceptor; for enolization step) is an active-site residue. Asn-128 (for ring-opening step) is an active-site residue. The active-site Proton acceptor; for ring-opening step is the His-130. Residue Glu-135 is the For ring-opening step of the active site.

The protein belongs to the glucosamine/galactosamine-6-phosphate isomerase family. NagB subfamily.

It carries out the reaction alpha-D-glucosamine 6-phosphate + H2O = beta-D-fructose 6-phosphate + NH4(+). It participates in amino-sugar metabolism; N-acetylneuraminate degradation; D-fructose 6-phosphate from N-acetylneuraminate: step 5/5. Catalyzes the reversible isomerization-deamination of glucosamine 6-phosphate (GlcN6P) to form fructose 6-phosphate (Fru6P) and ammonium ion. This is Glucosamine-6-phosphate deaminase from Streptococcus pneumoniae (strain JJA).